A 205-amino-acid polypeptide reads, in one-letter code: Holliday junction branch migration complex subunit RuvA (205 aa).

A domain I region spans residues 1–64; the sequence is MIGRLRGVLV…EDAQLLYGFI (64 aa). Residues 65–143 form a domain II region; that stretch reads TKQERALFRL…SLMEASAGSE (79 aa). The interval 144-156 is flexible linker; the sequence is REFVLQSNYSPTP. A domain III region spans residues 157 to 205; sequence TVNSAEEDAISALISLGYKPPQASKSVSAAYKEGMDSETLIKAALKSML.

The protein belongs to the RuvA family. In terms of assembly, homotetramer. Forms an RuvA(8)-RuvB(12)-Holliday junction (HJ) complex. HJ DNA is sandwiched between 2 RuvA tetramers; dsDNA enters through RuvA and exits via RuvB. An RuvB hexamer assembles on each DNA strand where it exits the tetramer. Each RuvB hexamer is contacted by two RuvA subunits (via domain III) on 2 adjacent RuvB subunits; this complex drives branch migration. In the full resolvosome a probable DNA-RuvA(4)-RuvB(12)-RuvC(2) complex forms which resolves the HJ.

It localises to the cytoplasm. The RuvA-RuvB-RuvC complex processes Holliday junction (HJ) DNA during genetic recombination and DNA repair, while the RuvA-RuvB complex plays an important role in the rescue of blocked DNA replication forks via replication fork reversal (RFR). RuvA specifically binds to HJ cruciform DNA, conferring on it an open structure. The RuvB hexamer acts as an ATP-dependent pump, pulling dsDNA into and through the RuvAB complex. HJ branch migration allows RuvC to scan DNA until it finds its consensus sequence, where it cleaves and resolves the cruciform DNA. The sequence is that of Holliday junction branch migration complex subunit RuvA from Shewanella sp. (strain W3-18-1).